Reading from the N-terminus, the 182-residue chain is MQFNIPTLLTLFRVILIPFFVLVFYLPVTWSPFAAALIFCVAAVTDWFDGFLARRWNQSTRFGAFLDPVADKVLVAIAMVLVTEHYHSWWVTLPAATMIAREIIISALREWMAELGKRSSVAVSWIGKVKTTAQMVALAWLLWRPNIWVEYVGIALFFVAAVLTLWSMLQYLSAARADLLDQ.

The Cytoplasmic portion of the chain corresponds to 2 to 12 (QFNIPTLLTLF). The chain crosses the membrane as a helical span at residues 13 to 37 (RVILIPFFVLVFYLPVTWSPFAAAL). Topologically, residues 38 to 60 (IFCVAAVTDWFDGFLARRWNQST) are periplasmic. A helical membrane pass occupies residues 61–81 (RFGAFLDPVADKVLVAIAMVL). The Cytoplasmic segment spans residues 82–86 (VTEHY). Residues 87 to 107 (HSWWVTLPAATMIAREIIISA) traverse the membrane as a helical segment. The Periplasmic segment spans residues 108–145 (LREWMAELGKRSSVAVSWIGKVKTTAQMVALAWLLWRP). The helical transmembrane segment at 146–168 (NIWVEYVGIALFFVAAVLTLWSM) threads the bilayer. Residues 169 to 181 (LQYLSAARADLLD) lie on the Cytoplasmic side of the membrane.

Belongs to the CDP-alcohol phosphatidyltransferase class-I family.

It localises to the cell inner membrane. The enzyme catalyses a CDP-1,2-diacyl-sn-glycerol + sn-glycerol 3-phosphate = a 1,2-diacyl-sn-glycero-3-phospho-(1'-sn-glycero-3'-phosphate) + CMP + H(+). It participates in phospholipid metabolism; phosphatidylglycerol biosynthesis; phosphatidylglycerol from CDP-diacylglycerol: step 1/2. In terms of biological role, catalyzes the conversion of cytidine diphosphate diacylglycerol (CDP-DG) and glycerol 3-phosphate into phosphatidylglycerol. Essential for the synthesis of anionic phospholipids, thereby playing a role in balancing the ratio of zwitterionic and anionic phospholipids, which is thought to be important for normal membrane function. This Shigella boydii serotype 4 (strain Sb227) protein is CDP-diacylglycerol--glycerol-3-phosphate 3-phosphatidyltransferase.